Here is a 100-residue protein sequence, read N- to C-terminus: Cytochrome bo(3) ubiquinol oxidase subunit 4 (100 aa).

Over 1 to 9 (MLKNRYLKY) the chain is Cytoplasmic. Residues 10-32 (LFILILLSILSIMPIFAIIYRIF) traverse the membrane as a helical segment. Topologically, residues 33 to 36 (SRNY) are extracellular. A helical transmembrane segment spans residues 37–59 (LYAFIIVCLFFQILAHIKFFLNL). Residues 60–68 (DFSLEQRWK) are Cytoplasmic-facing. Residues 69–90 (LISVIFSLVVGLIILLGSIWVI) form a helical membrane-spanning segment. Topologically, residues 91–100 (KNLNNNLCIM) are extracellular.

Belongs to the cytochrome c oxidase bacterial subunit 4 family. As to quaternary structure, heterooctamer of two A chains, two B chains, two C chains and two D chains.

It is found in the cell membrane. Cytochrome bo(3) ubiquinol terminal oxidase is the component of the aerobic respiratory chain of E.coli that predominates when cells are grown at high aeration. Has proton pump activity across the membrane in addition to electron transfer, pumping 2 protons/electron. This chain is Cytochrome bo(3) ubiquinol oxidase subunit 4 (cyoD), found in Buchnera aphidicola subsp. Baizongia pistaciae (strain Bp).